The sequence spans 461 residues: GTPase Era, mitochondrial (461 aa).

The transit peptide at 1–35 directs the protein to the mitochondrion; sequence MAAPWLQRWRGAYAGPSGPLRLVRLHGVQRSSWRA. The segment at 39-73 is disordered; sequence AAGAFGAGPHPGPPQRAANPGPGPHPPPVATSREK. The Era-type G domain maps to 89–354; that stretch reads KVLRISIIGA…QYLLMQAKPG (266 aa). The interval 97 to 104 is G1; sequence GAPNSGKS. 97 to 104 contributes to the GTP binding site; sequence GAPNSGKS. The tract at residues 123-127 is G2; sequence HTTRC. Residues 144 to 147 are G3; the sequence is DTPG. Residues 144–148 and 213–216 each bind GTP; these read DTPGL and NKVD. Residues 213–216 form a G4 region; sequence NKVD. Residues 260–319 are disordered; it reads KVTQTPPPENRARESPCQLETDKAQEGSSLDNSSDVKASESSLDTEAREQKPYKYGDQKN. Residues 269–284 are compositionally biased toward basic and acidic residues; that stretch reads NRARESPCQLETDKAQ. Residues 285–303 show a composition bias toward polar residues; sequence EGSSLDNSSDVKASESSLD. Positions 304–319 are enriched in basic and acidic residues; the sequence is TEAREQKPYKYGDQKN. Residues 332–334 form a G5 region; sequence LAA. The KH type-2 domain maps to 380–461; sequence ILEYLPLEVP…RLKLKVEVKS (82 aa).

The protein belongs to the TRAFAC class TrmE-Era-EngA-EngB-Septin-like GTPase superfamily. Era GTPase family.

It localises to the mitochondrion matrix. It is found in the mitochondrion inner membrane. Its function is as follows. Probable GTPase that plays a role in the mitochondrial ribosomal small subunit assembly. Specifically binds the 12S mitochondrial rRNA (12S mt-rRNA) to a 33 nucleotide section delineating the 3' terminal stem-loop region. May act as a chaperone that protects the 12S mt-rRNA on the 28S mitoribosomal subunit during ribosomal small subunit assembly. The sequence is that of GTPase Era, mitochondrial (ERAL1) from Gallus gallus (Chicken).